We begin with the raw amino-acid sequence, 275 residues long: 4-hydroxy-3-methylbut-2-enyl diphosphate reductase (275 aa).

Position 12 (cysteine 12) interacts with [4Fe-4S] cluster. 2 residues coordinate (2E)-4-hydroxy-3-methylbut-2-enyl diphosphate: histidine 40 and histidine 70. Residues histidine 40 and histidine 70 each coordinate dimethylallyl diphosphate. Residues histidine 40 and histidine 70 each contribute to the isopentenyl diphosphate site. Cysteine 92 contributes to the [4Fe-4S] cluster binding site. Histidine 119 lines the (2E)-4-hydroxy-3-methylbut-2-enyl diphosphate pocket. Histidine 119 is a dimethylallyl diphosphate binding site. Histidine 119 is an isopentenyl diphosphate binding site. The active-site Proton donor is glutamate 121. Threonine 151 is a (2E)-4-hydroxy-3-methylbut-2-enyl diphosphate binding site. Residue cysteine 181 participates in [4Fe-4S] cluster binding. Residues serine 209, serine 210, asparagine 211, and serine 251 each contribute to the (2E)-4-hydroxy-3-methylbut-2-enyl diphosphate site. Dimethylallyl diphosphate is bound by residues serine 209, serine 210, asparagine 211, and serine 251. Isopentenyl diphosphate is bound by residues serine 209, serine 210, asparagine 211, and serine 251.

The protein belongs to the IspH family. The cofactor is [4Fe-4S] cluster.

The catalysed reaction is isopentenyl diphosphate + 2 oxidized [2Fe-2S]-[ferredoxin] + H2O = (2E)-4-hydroxy-3-methylbut-2-enyl diphosphate + 2 reduced [2Fe-2S]-[ferredoxin] + 2 H(+). The enzyme catalyses dimethylallyl diphosphate + 2 oxidized [2Fe-2S]-[ferredoxin] + H2O = (2E)-4-hydroxy-3-methylbut-2-enyl diphosphate + 2 reduced [2Fe-2S]-[ferredoxin] + 2 H(+). Its pathway is isoprenoid biosynthesis; dimethylallyl diphosphate biosynthesis; dimethylallyl diphosphate from (2E)-4-hydroxy-3-methylbutenyl diphosphate: step 1/1. It participates in isoprenoid biosynthesis; isopentenyl diphosphate biosynthesis via DXP pathway; isopentenyl diphosphate from 1-deoxy-D-xylulose 5-phosphate: step 6/6. In terms of biological role, catalyzes the conversion of 1-hydroxy-2-methyl-2-(E)-butenyl 4-diphosphate (HMBPP) into a mixture of isopentenyl diphosphate (IPP) and dimethylallyl diphosphate (DMAPP). Acts in the terminal step of the DOXP/MEP pathway for isoprenoid precursor biosynthesis. This Thermotoga petrophila (strain ATCC BAA-488 / DSM 13995 / JCM 10881 / RKU-1) protein is 4-hydroxy-3-methylbut-2-enyl diphosphate reductase.